The primary structure comprises 193 residues: Hypoxanthine/guanine phosphoribosyltransferase (193 aa).

The protein belongs to the purine/pyrimidine phosphoribosyltransferase family. Archaeal HPRT subfamily. As to quaternary structure, homodimer.

It localises to the cytoplasm. The enzyme catalyses IMP + diphosphate = hypoxanthine + 5-phospho-alpha-D-ribose 1-diphosphate. It catalyses the reaction GMP + diphosphate = guanine + 5-phospho-alpha-D-ribose 1-diphosphate. It participates in purine metabolism; IMP biosynthesis via salvage pathway; IMP from hypoxanthine: step 1/1. Its function is as follows. Catalyzes a salvage reaction resulting in the formation of IMP that is energically less costly than de novo synthesis. The chain is Hypoxanthine/guanine phosphoribosyltransferase from Methanothermobacter thermautotrophicus (strain ATCC 29096 / DSM 1053 / JCM 10044 / NBRC 100330 / Delta H) (Methanobacterium thermoautotrophicum).